Here is a 156-residue protein sequence, read N- to C-terminus: Ribosomal RNA large subunit methyltransferase H (156 aa).

Residues Leu-73, Gly-104, and 123-128 (ISSMTL) each bind S-adenosyl-L-methionine.

The protein belongs to the RNA methyltransferase RlmH family. Homodimer.

The protein localises to the cytoplasm. The enzyme catalyses pseudouridine(1915) in 23S rRNA + S-adenosyl-L-methionine = N(3)-methylpseudouridine(1915) in 23S rRNA + S-adenosyl-L-homocysteine + H(+). In terms of biological role, specifically methylates the pseudouridine at position 1915 (m3Psi1915) in 23S rRNA. The chain is Ribosomal RNA large subunit methyltransferase H from Burkholderia vietnamiensis (strain G4 / LMG 22486) (Burkholderia cepacia (strain R1808)).